Consider the following 406-residue polypeptide: Arginine biosynthesis bifunctional protein ArgJ (406 aa).

Substrate-binding residues include T152, K179, T190, E277, N401, and S406. The active-site Nucleophile is T190.

It belongs to the ArgJ family. Heterotetramer of two alpha and two beta chains.

It localises to the cytoplasm. The catalysed reaction is N(2)-acetyl-L-ornithine + L-glutamate = N-acetyl-L-glutamate + L-ornithine. It catalyses the reaction L-glutamate + acetyl-CoA = N-acetyl-L-glutamate + CoA + H(+). It functions in the pathway amino-acid biosynthesis; L-arginine biosynthesis; L-ornithine and N-acetyl-L-glutamate from L-glutamate and N(2)-acetyl-L-ornithine (cyclic): step 1/1. The protein operates within amino-acid biosynthesis; L-arginine biosynthesis; N(2)-acetyl-L-ornithine from L-glutamate: step 1/4. Functionally, catalyzes two activities which are involved in the cyclic version of arginine biosynthesis: the synthesis of N-acetylglutamate from glutamate and acetyl-CoA as the acetyl donor, and of ornithine by transacetylation between N(2)-acetylornithine and glutamate. This is Arginine biosynthesis bifunctional protein ArgJ from Neisseria gonorrhoeae (strain ATCC 700825 / FA 1090).